The chain runs to 284 residues: UPF0354 protein SERP1303 (284 aa).

This sequence belongs to the UPF0354 family.

The sequence is that of UPF0354 protein SERP1303 from Staphylococcus epidermidis (strain ATCC 35984 / DSM 28319 / BCRC 17069 / CCUG 31568 / BM 3577 / RP62A).